The following is a 293-amino-acid chain: Fructose-bisphosphate aldolase (293 aa).

Residue serine 50 participates in D-glyceraldehyde 3-phosphate binding. Aspartate 85 (proton donor) is an active-site residue. Positions 86, 106, 136, and 178 each coordinate Zn(2+). A dihydroxyacetone phosphate-binding site is contributed by glycine 179. Histidine 208 serves as a coordination point for Zn(2+). Dihydroxyacetone phosphate contacts are provided by residues 209–211 (GGS) and 230–233 (NVNT).

The protein belongs to the class II fructose-bisphosphate aldolase family. Requires Zn(2+) as cofactor.

The enzyme catalyses beta-D-fructose 1,6-bisphosphate = D-glyceraldehyde 3-phosphate + dihydroxyacetone phosphate. It participates in carbohydrate degradation; glycolysis; D-glyceraldehyde 3-phosphate and glycerone phosphate from D-glucose: step 4/4. Functionally, catalyzes the aldol condensation of dihydroxyacetone phosphate (DHAP or glycerone-phosphate) with glyceraldehyde 3-phosphate (G3P) to form fructose 1,6-bisphosphate (FBP) in gluconeogenesis and the reverse reaction in glycolysis. The sequence is that of Fructose-bisphosphate aldolase (fba) from Streptococcus pneumoniae serotype 4 (strain ATCC BAA-334 / TIGR4).